Here is a 408-residue protein sequence, read N- to C-terminus: Glutamate N-acetyltransferase (408 aa).

Thr-150, Lys-176, Thr-189, Glu-271, Asn-403, and Thr-408 together coordinate substrate. Thr-189 (nucleophile) is an active-site residue.

Belongs to the ArgJ family. As to quaternary structure, heterotetramer of two alpha and two beta chains.

It localises to the cytoplasm. The catalysed reaction is N(2)-acetyl-L-ornithine + L-glutamate = N-acetyl-L-glutamate + L-ornithine. It functions in the pathway amino-acid biosynthesis; L-arginine biosynthesis; L-ornithine and N-acetyl-L-glutamate from L-glutamate and N(2)-acetyl-L-ornithine (cyclic): step 1/1. Functionally, catalyzes the transfer of the acetyl group from N(2)-acetylornithine to glutamate, forming N-acetylglutamate and L-ornithine. This chain is Glutamate N-acetyltransferase, found in Methanococcus maripaludis (strain DSM 14266 / JCM 13030 / NBRC 101832 / S2 / LL).